The sequence spans 370 residues: Cyanuric acid amidohydrolase (370 aa).

The interval 1 to 103 (MQAQVFRVPM…TIFTVQKTDN (103 aa)) is RU A. Residues Arg-51 and 82–83 (SG) each bind substrate. Positions 113-250 (RLAVQQIFTR…NEIIVMGNSR (138 aa)) are RU B. Lys-163 is an active-site residue. Substrate is bound by residues Arg-195 and 233-234 (SA). The active-site Nucleophile is the Ser-233. Residues 256-370 (LVIGHAEMKD…GPVAVIARTA (115 aa)) form an RU C region. Position 303 (Glu-303) interacts with Mg(2+). Substrate is bound by residues Arg-330 and 349-350 (SG). 5 residues coordinate Mg(2+): Ser-352, Gln-355, Gly-356, Pro-357, and Gly-360.

It belongs to the cyclic amide hydrolase (CyAH) family. Homotetramer.

The catalysed reaction is cyanurate + H2O = 1-carboxybiuret + H(+). It functions in the pathway xenobiotic degradation; atrazine degradation; biuret from cyanurate: step 1/1. With respect to regulation, inhibited by barbituric acid. Responsible for the hydrolysis of cyanuric acid, an intermediate formed during catabolism of s-triazine based compounds in herbicides such as atrazine and polymers such as melamine. Catalyzes the hydrolytic opening of the s-triazine ring of cyanuric acid (2,4,6-trihydroxy-s-triazine) to yield carbon dioxide and carboxybiuret, which spontaneously decarboxylates to biuret. This chain is Cyanuric acid amidohydrolase (trzD), found in Pseudomonas sp.